Consider the following 466-residue polypeptide: Glutamate--tRNA ligase (466 aa).

The short motif at Pro11–Asn21 is the 'HIGH' region element. A 'KMSKS' region motif is present at residues Lys243–Arg247. Residue Lys246 participates in ATP binding.

Belongs to the class-I aminoacyl-tRNA synthetase family. Glutamate--tRNA ligase type 1 subfamily. Monomer.

Its subcellular location is the cytoplasm. It carries out the reaction tRNA(Glu) + L-glutamate + ATP = L-glutamyl-tRNA(Glu) + AMP + diphosphate. Its function is as follows. Catalyzes the attachment of glutamate to tRNA(Glu) in a two-step reaction: glutamate is first activated by ATP to form Glu-AMP and then transferred to the acceptor end of tRNA(Glu). The protein is Glutamate--tRNA ligase of Cupriavidus necator (strain ATCC 17699 / DSM 428 / KCTC 22496 / NCIMB 10442 / H16 / Stanier 337) (Ralstonia eutropha).